The sequence spans 145 residues: MANNRLMPEGQIIEEDMDGEDQNARELDIDDDDDSELDDMRVMRLNNPQVAMLLDAPHEPPFNLHHMLGPVAMPTRPRNKRSFLTVAKPFHIQPQMCALVANGWQAVQHLQPEMRRDYFANYLYENMNSKNYPNGEGLPHHWGQF.

The segment at 1–34 (MANNRLMPEGQIIEEDMDGEDQNARELDIDDDDD) is disordered. The segment covering 12-21 (IIEEDMDGED) has biased composition (acidic residues).

It belongs to the male-specific scotti family.

Functionally, post-meiotically transcribed gene that has a role in late spermiogenesis; required for actin cone progression during spermatid individualization. This Drosophila willistoni (Fruit fly) protein is Male-specific protein scotti.